We begin with the raw amino-acid sequence, 138 residues long: Large ribosomal subunit protein uL16 (138 aa).

The segment covering Met-1–Gly-19 has biased composition (basic residues). The interval Met-1 to Lys-22 is disordered.

This sequence belongs to the universal ribosomal protein uL16 family. Part of the 50S ribosomal subunit.

In terms of biological role, binds 23S rRNA and is also seen to make contacts with the A and possibly P site tRNAs. The protein is Large ribosomal subunit protein uL16 of Parafrankia sp. (strain EAN1pec).